The sequence spans 164 residues: Protein-export protein SecB (164 aa).

Over residues 1–12 (MPDKDEITHDAQ) the composition is skewed to basic and acidic residues. Positions 1–22 (MPDKDEITHDAQSENEESLPLA) are disordered.

Belongs to the SecB family. Homotetramer, a dimer of dimers. One homotetramer interacts with 1 SecA dimer.

Its subcellular location is the cytoplasm. Functionally, one of the proteins required for the normal export of preproteins out of the cell cytoplasm. It is a molecular chaperone that binds to a subset of precursor proteins, maintaining them in a translocation-competent state. It also specifically binds to its receptor SecA. This Neorickettsia sennetsu (strain ATCC VR-367 / Miyayama) (Ehrlichia sennetsu) protein is Protein-export protein SecB.